The following is a 207-amino-acid chain: Outer-membrane lipoprotein LolB (207 aa).

Positions 1–21 (MPLPDFRLIRLLPLAALVLTA) are cleaved as a signal peptide. Cys22 carries N-palmitoyl cysteine lipidation. The S-diacylglycerol cysteine moiety is linked to residue Cys22.

The protein belongs to the LolB family. Monomer.

It is found in the cell outer membrane. Its function is as follows. Plays a critical role in the incorporation of lipoproteins in the outer membrane after they are released by the LolA protein. The chain is Outer-membrane lipoprotein LolB from Shigella boydii serotype 18 (strain CDC 3083-94 / BS512).